The chain runs to 202 residues: Histone H1 (202 aa).

2 disordered regions span residues 1-50 and 114-202; these read MTAI…VTHP and YKLS…KIAV. Basic and acidic residues predominate over residues 18–38; that stretch reads EASKVKEQAPATDKKPRAPKE. The H15 domain maps to 48–118; that stretch reads THPPYFQMIK…KIKASYKLSE (71 aa). The span at 160-202 shows a compositional bias: basic residues; it reads KAKATPKPKKVGAKRTRKSTPAKAKQPKSIKSPAAKRAKKIAV.

The protein belongs to the histone H1/H5 family.

The protein resides in the nucleus. It is found in the chromosome. Histones H1 are necessary for the condensation of nucleosome chains into higher-order structures. The sequence is that of Histone H1 from Solanum pennellii (Tomato).